The sequence spans 113 residues: DNA-directed RNA polymerase subunit omega (113 aa).

It belongs to the RNA polymerase subunit omega family. The RNAP catalytic core consists of 2 alpha, 1 beta, 1 beta' and 1 omega subunit. When a sigma factor is associated with the core the holoenzyme is formed, which can initiate transcription.

The enzyme catalyses RNA(n) + a ribonucleoside 5'-triphosphate = RNA(n+1) + diphosphate. Its function is as follows. Promotes RNA polymerase assembly. Latches the N- and C-terminal regions of the beta' subunit thereby facilitating its interaction with the beta and alpha subunits. The sequence is that of DNA-directed RNA polymerase subunit omega from Rhizorhabdus wittichii (strain DSM 6014 / CCUG 31198 / JCM 15750 / NBRC 105917 / EY 4224 / RW1) (Sphingomonas wittichii).